Consider the following 524-residue polypeptide: Putative cysteine ligase BshC (524 aa).

Positions 437–457 (AQALDRSARKINYQIEKMERK) form a coiled coil.

The protein belongs to the BshC family.

This chain is Putative cysteine ligase BshC, found in Solibacter usitatus (strain Ellin6076).